Consider the following 215-residue polypeptide: Reticulon-like protein B14 (215 aa).

A Reticulon domain is found at 31–211 (FADIMFWKNK…NKIPKAQAKT (181 aa)). 3 helical membrane-spanning segments follow: residues 41-61 (KESG…EVVE), 62-82 (YPFI…FLIW), and 141-161 (LWIL…YIVF).

Its subcellular location is the endoplasmic reticulum membrane. This is Reticulon-like protein B14 (RTNLB14) from Arabidopsis thaliana (Mouse-ear cress).